The primary structure comprises 342 residues: MEEDFNIRDHQLTSRERDFENALRPLSFEDFNGQDKVVDNLRIFVKAARLRAEALDHVLLHGPPGLGKTTLSNIIANELGVGFKVTSGPVLDKPGDLAGVLTSLEPNDVLFIDEIHRLSPVVEEYLYSAMEDYRIDIMIDKGPSARSIQIDLNPFTLVGATTRSGLLTAPLRARFGINLHLEYYDDDILSNIISRSAGILDVPCSSQAAGEIASRSRGTPRIANALLRRVRDFAQVKGSGSIDTEIANYALEALNIDKYGLDEIDNKILCTIIDKFKGGPVGLTTIATALGEDAGTIEEVYEPFLIKEGFLKRTPRGREVTELAYKHLGRSLYNSQKTLFND.

Residues 1 to 184 are large ATPase domain (RuvB-L); it reads MEEDFNIRDH…FGINLHLEYY (184 aa). Residues leucine 23, arginine 24, glycine 65, lysine 68, threonine 69, threonine 70, 131–133, arginine 174, tyrosine 184, and arginine 221 contribute to the ATP site; that span reads EDY. Mg(2+) is bound at residue threonine 69. The small ATPAse domain (RuvB-S) stretch occupies residues 185 to 255; sequence DDDILSNIIS…IANYALEALN (71 aa). The tract at residues 258–342 is head domain (RuvB-H); the sequence is KYGLDEIDNK…YNSQKTLFND (85 aa). Positions 313 and 318 each coordinate DNA.

Belongs to the RuvB family. As to quaternary structure, homohexamer. Forms an RuvA(8)-RuvB(12)-Holliday junction (HJ) complex. HJ DNA is sandwiched between 2 RuvA tetramers; dsDNA enters through RuvA and exits via RuvB. An RuvB hexamer assembles on each DNA strand where it exits the tetramer. Each RuvB hexamer is contacted by two RuvA subunits (via domain III) on 2 adjacent RuvB subunits; this complex drives branch migration. In the full resolvosome a probable DNA-RuvA(4)-RuvB(12)-RuvC(2) complex forms which resolves the HJ.

Its subcellular location is the cytoplasm. It catalyses the reaction ATP + H2O = ADP + phosphate + H(+). Its function is as follows. The RuvA-RuvB-RuvC complex processes Holliday junction (HJ) DNA during genetic recombination and DNA repair, while the RuvA-RuvB complex plays an important role in the rescue of blocked DNA replication forks via replication fork reversal (RFR). RuvA specifically binds to HJ cruciform DNA, conferring on it an open structure. The RuvB hexamer acts as an ATP-dependent pump, pulling dsDNA into and through the RuvAB complex. RuvB forms 2 homohexamers on either side of HJ DNA bound by 1 or 2 RuvA tetramers; 4 subunits per hexamer contact DNA at a time. Coordinated motions by a converter formed by DNA-disengaged RuvB subunits stimulates ATP hydrolysis and nucleotide exchange. Immobilization of the converter enables RuvB to convert the ATP-contained energy into a lever motion, pulling 2 nucleotides of DNA out of the RuvA tetramer per ATP hydrolyzed, thus driving DNA branch migration. The RuvB motors rotate together with the DNA substrate, which together with the progressing nucleotide cycle form the mechanistic basis for DNA recombination by continuous HJ branch migration. Branch migration allows RuvC to scan DNA until it finds its consensus sequence, where it cleaves and resolves cruciform DNA. The chain is Holliday junction branch migration complex subunit RuvB from Bacteroides fragilis (strain ATCC 25285 / DSM 2151 / CCUG 4856 / JCM 11019 / LMG 10263 / NCTC 9343 / Onslow / VPI 2553 / EN-2).